The chain runs to 404 residues: Nicotinate phosphoribosyltransferase (404 aa).

Phosphohistidine; by autocatalysis is present on His-225.

This sequence belongs to the NAPRTase family. In terms of processing, transiently phosphorylated on a His residue during the reaction cycle. Phosphorylation strongly increases the affinity for substrates and increases the rate of nicotinate D-ribonucleotide production. Dephosphorylation regenerates the low-affinity form of the enzyme, leading to product release.

The enzyme catalyses nicotinate + 5-phospho-alpha-D-ribose 1-diphosphate + ATP + H2O = nicotinate beta-D-ribonucleotide + ADP + phosphate + diphosphate. It participates in cofactor biosynthesis; NAD(+) biosynthesis; nicotinate D-ribonucleotide from nicotinate: step 1/1. Its function is as follows. Catalyzes the synthesis of beta-nicotinate D-ribonucleotide from nicotinate and 5-phospho-D-ribose 1-phosphate at the expense of ATP. This Acinetobacter baumannii (strain ATCC 17978 / DSM 105126 / CIP 53.77 / LMG 1025 / NCDC KC755 / 5377) protein is Nicotinate phosphoribosyltransferase.